We begin with the raw amino-acid sequence, 399 residues long: Glutathione S-transferase LANCL1 (399 aa).

A2 is subject to N-acetylalanine. K142 is subject to N6-acetyllysine. C276 provides a ligand contact to Zn(2+). K317 contributes to the glutathione binding site. Zn(2+) contacts are provided by C322 and H323. Residue 364-367 (RTPD) participates in glutathione binding.

The protein belongs to the LanC-like protein family. As to quaternary structure, interacts with the C-terminal of STOM. Interacts with the EPS8 SH3 domain. Interaction with EPS8 is inhibited by glutathione binding. (Microbial infection) Interacts with P.falciparum SBP1. In terms of tissue distribution, detected in erythrocytes, brain, kidney, testis, ovary, heart, lung, placenta and spleen (at protein level). Ubiquitous. Strongly expressed in brain, spinal cord, pituitary gland, kidney, heart, skeletal muscle, pancreas, ovary and testis.

The protein localises to the cytoplasm. It localises to the cell membrane. The enzyme catalyses RX + glutathione = an S-substituted glutathione + a halide anion + H(+). The catalysed reaction is 1-chloro-2,4-dinitrobenzene + glutathione = 2,4-dinitrophenyl-S-glutathione + chloride + H(+). Its function is as follows. Functions as a glutathione transferase. Catalyzes conjugation of the glutathione (GSH) to artificial substrates 1-chloro-2,4-dinitrobenzene (CDNB) and p-nitrophenyl acetate. Mitigates neuronal oxidative stress during normal postnatal development and in response to oxidative stresses probably through GSH antioxidant defense mechanism. May play a role in EPS8 signaling. Binds glutathione. In Homo sapiens (Human), this protein is Glutathione S-transferase LANCL1.